The chain runs to 205 residues: Interleukin-6 (205 aa).

The N-terminal stretch at 1-21 (RFTSAFSLGLLLVTATAFPTP) is a signal peptide. A disulfide bridge connects residues Cys-64 and Cys-70. Phosphoserine is present on Ser-73. Cysteines 93 and 103 form a disulfide. N-linked (GlcNAc...) asparagine glycosylation is present at Asn-164.

The protein belongs to the IL-6 superfamily. As to quaternary structure, component of a hexamer of two molecules each of IL6, IL6R and IL6ST; first binds to IL6R to associate with the signaling subunit IL6ST. Interacts with IL6R (via the N-terminal ectodomain); this interaction may be affected by IL6R-binding with SORL1, hence decreasing IL6 cis signaling. Interacts with SORL1 (via the N-terminal ectodomain); this interaction leads to IL6 internalization and lysosomal degradation. May form a trimeric complex with the soluble SORL1 ectodomain and soluble IL6R receptor; this interaction might stabilize circulating IL6, hence promoting IL6 trans signaling.

It is found in the secreted. Its function is as follows. Cytokine with a wide variety of biological functions in immunity, tissue regeneration, and metabolism. Binds to IL6R, then the complex associates to the signaling subunit IL6ST/gp130 to trigger the intracellular IL6-signaling pathway. The interaction with the membrane-bound IL6R and IL6ST stimulates 'classic signaling', whereas the binding of IL6 and soluble IL6R to IL6ST stimulates 'trans-signaling'. Alternatively, 'cluster signaling' occurs when membrane-bound IL6:IL6R complexes on transmitter cells activate IL6ST receptors on neighboring receiver cells. IL6 is a potent inducer of the acute phase response. Rapid production of IL6 contributes to host defense during infection and tissue injury, but excessive IL6 synthesis is involved in disease pathology. In the innate immune response, is synthesized by myeloid cells, such as macrophages and dendritic cells, upon recognition of pathogens through toll-like receptors (TLRs) at the site of infection or tissue injury. In the adaptive immune response, is required for the differentiation of B cells into immunoglobulin-secreting cells. Plays a major role in the differentiation of CD4(+) T cell subsets. Essential factor for the development of T follicular helper (Tfh) cells that are required for the induction of germinal-center formation. Required to drive naive CD4(+) T cells to the Th17 lineage. Also required for proliferation of myeloma cells and the survival of plasmablast cells. Functionally, acts as an essential factor in bone homeostasis and on vessels directly or indirectly by induction of VEGF, resulting in increased angiogenesis activity and vascular permeability. Induces, through 'trans-signaling' and synergistically with IL1B and TNF, the production of VEGF. Involved in metabolic controls, is discharged into the bloodstream after muscle contraction increasing lipolysis and improving insulin resistance. 'Trans-signaling' in central nervous system also regulates energy and glucose homeostasis. Mediates, through GLP-1, crosstalk between insulin-sensitive tissues, intestinal L cells and pancreatic islets to adapt to changes in insulin demand. Also acts as a myokine. Plays a protective role during liver injury, being required for maintenance of tissue regeneration. Also has a pivotal role in iron metabolism by regulating HAMP/hepcidin expression upon inflammation or bacterial infection. Through activation of IL6ST-YAP-NOTCH pathway, induces inflammation-induced epithelial regeneration. The chain is Interleukin-6 (IL6) from Orcinus orca (Killer whale).